Consider the following 132-residue polypeptide: UPF0201 protein MTH_433 (132 aa).

It belongs to the UPF0201 family.

This chain is UPF0201 protein MTH_433, found in Methanothermobacter thermautotrophicus (strain ATCC 29096 / DSM 1053 / JCM 10044 / NBRC 100330 / Delta H) (Methanobacterium thermoautotrophicum).